A 209-amino-acid polypeptide reads, in one-letter code: LexA repressor (209 aa).

Positions 28–48 (RVELAKILGFRSANAAEEHLK) form a DNA-binding region, H-T-H motif. Residues serine 126 and lysine 163 each act as for autocatalytic cleavage activity in the active site.

This sequence belongs to the peptidase S24 family. As to quaternary structure, homodimer.

It catalyses the reaction Hydrolysis of Ala-|-Gly bond in repressor LexA.. Its function is as follows. Represses a number of genes involved in the response to DNA damage (SOS response), including recA and lexA. In the presence of single-stranded DNA, RecA interacts with LexA causing an autocatalytic cleavage which disrupts the DNA-binding part of LexA, leading to derepression of the SOS regulon and eventually DNA repair. The protein is LexA repressor of Psychromonas ingrahamii (strain DSM 17664 / CCUG 51855 / 37).